The following is a 186-amino-acid chain: ADP compounds hydrolase NudE (186 aa).

Glu-40 contacts substrate. A Nudix hydrolase domain is found at 45-172; that stretch reads TNREAVMIVP…DFNEARNVSA (128 aa). Residues 80 to 101 carry the Nudix box motif; it reads GLIDPGESVYEAANRELKEEVG. A divalent metal cation-binding residues include Glu-95 and Glu-99. Ser-118 contributes to the substrate binding site.

This sequence belongs to the Nudix hydrolase family. In terms of assembly, homodimer. Requires Mg(2+) as cofactor.

It catalyses the reaction ADP-D-ribose + H2O = D-ribose 5-phosphate + AMP + 2 H(+). Its function is as follows. Active on adenosine(5')triphospho(5')adenosine (Ap3A), ADP-ribose, NADH, adenosine(5')diphospho(5')adenosine (Ap2A). This chain is ADP compounds hydrolase NudE (nudE), found in Escherichia coli (strain K12).